A 410-amino-acid chain; its full sequence is uncharacterized protein (410 aa).

11 helical membrane-spanning segments follow: residues 14 to 34, 48 to 68, 82 to 102, 140 to 160, 164 to 184, 212 to 232, 251 to 271, 279 to 299, 303 to 323, 342 to 362, and 371 to 391; these read IIIG…FLAI, GLVI…GGYI, IFGW…WVFF, YAAI…FGSS, TPFL…ALQF, YLFT…SQFS, LYGL…FPIV, PLCS…IFTV, VPSI…LFSM, GAIG…GICI, and IYIF…LAFA.

It belongs to the major facilitator superfamily. TCR/Tet family.

The protein localises to the cell membrane. This is an uncharacterized protein from Bacillus subtilis (strain 168).